Reading from the N-terminus, the 90-residue chain is Cell division topological specificity factor (90 aa).

The interval 1 to 21 (MAGFWSKIFGNDEKPSSAQTA) is disordered. Over residues 10–21 (GNDEKPSSAQTA) the composition is skewed to basic and acidic residues.

Belongs to the MinE family.

Functionally, prevents the cell division inhibition by proteins MinC and MinD at internal division sites while permitting inhibition at polar sites. This ensures cell division at the proper site by restricting the formation of a division septum at the midpoint of the long axis of the cell. The chain is Cell division topological specificity factor from Acinetobacter baylyi (strain ATCC 33305 / BD413 / ADP1).